The following is a 691-amino-acid chain: Elongation factor G (691 aa).

The tr-type G domain maps to 6–281; the sequence is SKYRNIGIMA…GVVDFLPSPI (276 aa). GTP-binding positions include 15-22, 79-83, and 133-136; these read AHIDAGKT, DTPGH, and NKMD.

It belongs to the TRAFAC class translation factor GTPase superfamily. Classic translation factor GTPase family. EF-G/EF-2 subfamily.

It localises to the cytoplasm. Catalyzes the GTP-dependent ribosomal translocation step during translation elongation. During this step, the ribosome changes from the pre-translocational (PRE) to the post-translocational (POST) state as the newly formed A-site-bound peptidyl-tRNA and P-site-bound deacylated tRNA move to the P and E sites, respectively. Catalyzes the coordinated movement of the two tRNA molecules, the mRNA and conformational changes in the ribosome. The sequence is that of Elongation factor G from Wolbachia pipientis wMel.